A 1058-amino-acid chain; its full sequence is Ubiquitin-like modifier-activating enzyme 1 (1058 aa).

Residues 1–47 (MSSSPLSKKRRVSGPDPKPGSNCSPAQSVLPQVPSAPTNGMAKNGSE) form a disordered region. N-acetylserine is present on S2. A phosphoserine mark is found at S4, S13, S21, S24, and S46. The span at 21-38 (SNCSPAQSVLPQVPSAPT) shows a compositional bias: polar residues. Y55 is modified (phosphotyrosine). A run of 2 repeats spans residues 63–199 (GHEA…GQLF) and 459–611 (GSDL…QVVI). The segment at 63–611 (GHEAMKRLQT…GTKGNVQVVI (549 aa)) is 2 approximate repeats. Residues A478, D504, R515, K528, and 576-577 (DN) each bind ATP. The residue at position 528 (K528) is an N6-succinyllysine. C632 serves as the catalytic Glycyl thioester intermediate. At K671 the chain carries N6-acetyllysine. T800 carries the phosphothreonine modification. 4 positions are modified to phosphoserine: S810, S816, S820, and S835. N6-acetyllysine is present on K980.

This sequence belongs to the ubiquitin-activating E1 family. In terms of assembly, monomer. In terms of tissue distribution, ubiquitous.

The protein resides in the cytoplasm. Its subcellular location is the mitochondrion. It is found in the nucleus. The catalysed reaction is ATP + ubiquitin + [E1 ubiquitin-activating enzyme]-L-cysteine = AMP + diphosphate + S-ubiquitinyl-[E1 ubiquitin-activating enzyme]-L-cysteine.. It functions in the pathway protein modification; protein ubiquitination. Its function is as follows. Catalyzes the first step in ubiquitin conjugation to mark cellular proteins for degradation through the ubiquitin-proteasome system. Activates ubiquitin by first adenylating its C-terminal glycine residue with ATP, and thereafter linking this residue to the side chain of a cysteine residue in E1, yielding a ubiquitin-E1 thioester and free AMP. Essential for the formation of radiation-induced foci, timely DNA repair and for response to replication stress. Promotes the recruitment of TP53BP1 and BRCA1 at DNA damage sites. The protein is Ubiquitin-like modifier-activating enzyme 1 (UBA1) of Oryctolagus cuniculus (Rabbit).